Consider the following 382-residue polypeptide: Lycopene beta-cyclase (382 aa).

Residue 6-36 coordinates NAD(+); the sequence is DLILVGAGLANGLIALRLQQQQPDMRILLID.

The protein belongs to the lycopene cyclase family. The cofactor is FAD.

Its subcellular location is the cell inner membrane. It catalyses the reaction a carotenoid psi-end group = a carotenoid beta-end derivative. The catalysed reaction is all-trans-lycopene = gamma-carotene. It carries out the reaction gamma-carotene = all-trans-beta-carotene. The enzyme catalyses all-trans-neurosporene = beta-zeacarotene. It catalyses the reaction beta-zeacarotene = 7,8-dihydro-beta-carotene. Its pathway is carotenoid biosynthesis; beta-carotene biosynthesis. Its activity is regulated as follows. Activity is increased in the presence of NAD(P)H. NADPH is not involved directly in the cyclization reaction, but must play an indirect role, e.g. as an allosteric activator. Functionally, catalyzes the double cyclization reaction which converts lycopene to beta-carotene. Also catalyzes the double cyclization reaction which converts neurosporene to 7,8-dihydro-beta-carotene via monocyclic beta-zeacarotene. May also convert zeta-carotene to bicyclic 7,8,7',8'-tetrahydro-beta-carotene. The protein is Lycopene beta-cyclase of Pantoea ananas (Erwinia uredovora).